A 126-amino-acid chain; its full sequence is Large ribosomal subunit protein bL19 (126 aa).

It belongs to the bacterial ribosomal protein bL19 family.

This protein is located at the 30S-50S ribosomal subunit interface and may play a role in the structure and function of the aminoacyl-tRNA binding site. The polypeptide is Large ribosomal subunit protein bL19 (Nitrobacter winogradskyi (strain ATCC 25391 / DSM 10237 / CIP 104748 / NCIMB 11846 / Nb-255)).